Here is a 339-residue protein sequence, read N- to C-terminus: Malate dehydrogenase 3, cytoplasmic (339 aa).

NAD(+)-binding positions include N22–I23, D49, and G96. Oxaloacetate is bound at residue R105. 2 residues coordinate NAD(+): Q119 and N138. Oxaloacetate is bound by residues N138, R169, H194, and S249. Residue H194 is the Proton acceptor of the active site.

This sequence belongs to the LDH/MDH superfamily. MDH type 2 family. As to expression, expressed in rosette leaves at low levels.

The protein resides in the cytoplasm. It carries out the reaction (S)-malate + NAD(+) = oxaloacetate + NADH + H(+). Catalyzes a reversible NAD-dependent dehydrogenase reaction involved in central metabolism and redox homeostasis between organelle compartments. The sequence is that of Malate dehydrogenase 3, cytoplasmic from Arabidopsis thaliana (Mouse-ear cress).